Reading from the N-terminus, the 114-residue chain is Protein S100-A9 (114 aa).

T2 is modified (blocked amino end (Thr)). C3 carries the S-nitrosocysteine; transient modification. EF-hand domains follow at residues 12–47 (IETIINTFHQYSVKLGHPDTLNQGEFKELVRKDLQN) and 54–89 (KNEKVIEHIMEDLDTNADKQLSFEEFIMLMARLTWA). H20 is a Zn(2+) binding site. Ca(2+) is bound by residues S23, L26, and H28. Position 30 (D30) interacts with Zn(2+). The Ca(2+) site is built by T31, E36, D67, N69, D71, Q73, and E78. 2 residues coordinate Zn(2+): H91 and H95. Residues 93–102 (KMHEGDEGPG) show a composition bias toward basic and acidic residues. A disordered region spans residues 93–114 (KMHEGDEGPGHHHKPGLGEGTP). At H105 the chain carries Pros-methylhistidine. T113 carries the phosphothreonine; by MAPK14 modification.

In terms of assembly, homodimer. Preferentially exists as a heterodimer or heterotetramer with S100A8 known as calprotectin (S100A8/A9). S100A9 interacts with ATP2A2. S100A9 interacts with AGER, and with the heterodimeric complex formed by TLR4 and LY96 in the presence of calcium and/or zinc ions. S100A9 binds quinoline-3-carboxamides in the presence of calcium and/or zinc ions. S100A9 interacts with amyloid-beta protein 40. Calprotectin (S100A8/9) interacts with CEACAM3 and tubulin filaments in a calcium-dependent manner. Heterotetrameric calprotectin (S100A8/A9) interacts with ANXA6 and associates with tubulin filaments in activated monocytes. Calprotectin (S100A8/9) interacts with NCF2/P67PHOX, RAC1, RAC2, CYBA and CYBB. Calprotectin (S100A8/9) interacts with NOS2 to form the iNOS-S100A8/A9 transnitrosylase complex; induced by LDL(ox). Calprotectin (S100A8/9) interacts with CD69. In terms of processing, phosphorylated. Phosphorylation inhibits activation of tubulin polymerization. S-nitrosylation of Cys-3 is implicated in LDL(ox)-induced S-nitrosylation of GAPDH at 'Cys-247' through a transnitrosylase mechanism involving a iNOS-S100A8/9 complex. Post-translationally, methylation at His-105 by METTL9 reduces zinc-binding without affecting heterodimerization with S100A8. As to expression, calprotectin (S100A8/9) is predominantly expressed in myeloid cells. Except for inflammatory conditions, the expression is restricted to a specific stage of myeloid differentiation since both proteins are expressed in circulating neutrophils and monocytes but are absent in normal tissue macrophages and lymphocytes. Under chronic inflammatory conditions, such as psoriasis and malignant disorders, also expressed in the epidermis. Found in high concentrations at local sites of inflammation or in the serum of patients with inflammatory diseases such as rheumatoid, cystic fibrosis, inflammatory bowel disease, Crohn's disease, giant cell arteritis, cystic fibrosis, Sjogren's syndrome, systemic lupus erythematosus, and progressive systemic sclerosis. Involved in the formation and deposition of amyloids in the aging prostate known as corpora amylacea inclusions. Strongly up-regulated in many tumors, including gastric, esophageal, colon, pancreatic, bladder, ovarian, thyroid, breast and skin cancers.

The protein resides in the secreted. Its subcellular location is the cytoplasm. It is found in the cytoskeleton. It localises to the cell membrane. Its function is as follows. S100A9 is a calcium- and zinc-binding protein which plays a prominent role in the regulation of inflammatory processes and immune response. It can induce neutrophil chemotaxis, adhesion, can increase the bactericidal activity of neutrophils by promoting phagocytosis via activation of SYK, PI3K/AKT, and ERK1/2 and can induce degranulation of neutrophils by a MAPK-dependent mechanism. Predominantly found as calprotectin (S100A8/A9) which has a wide plethora of intra- and extracellular functions. The intracellular functions include: facilitating leukocyte arachidonic acid trafficking and metabolism, modulation of the tubulin-dependent cytoskeleton during migration of phagocytes and activation of the neutrophilic NADPH-oxidase. Also participates in regulatory T-cell differentiation together with CD69. Activates NADPH-oxidase by facilitating the enzyme complex assembly at the cell membrane, transferring arachidonic acid, an essential cofactor, to the enzyme complex and S100A8 contributes to the enzyme assembly by directly binding to NCF2/P67PHOX. The extracellular functions involve pro-inflammatory, antimicrobial, oxidant-scavenging and apoptosis-inducing activities. Its pro-inflammatory activity includes recruitment of leukocytes, promotion of cytokine and chemokine production, and regulation of leukocyte adhesion and migration. Acts as an alarmin or a danger associated molecular pattern (DAMP) molecule and stimulates innate immune cells via binding to pattern recognition receptors such as Toll-like receptor 4 (TLR4) and receptor for advanced glycation endproducts (AGER). Binding to TLR4 and AGER activates the MAP-kinase and NF-kappa-B signaling pathways resulting in the amplification of the pro-inflammatory cascade. Has antimicrobial activity towards bacteria and fungi and exerts its antimicrobial activity probably via chelation of Zn(2+) which is essential for microbial growth. Can induce cell death via autophagy and apoptosis and this occurs through the cross-talk of mitochondria and lysosomes via reactive oxygen species (ROS) and the process involves BNIP3. Can regulate neutrophil number and apoptosis by an anti-apoptotic effect; regulates cell survival via ITGAM/ITGB and TLR4 and a signaling mechanism involving MEK-ERK. Its role as an oxidant scavenger has a protective role in preventing exaggerated tissue damage by scavenging oxidants. Can act as a potent amplifier of inflammation in autoimmunity as well as in cancer development and tumor spread. Has transnitrosylase activity; in oxidatively-modified low-densitity lipoprotein (LDL(ox))-induced S-nitrosylation of GAPDH on 'Cys-247' proposed to transfer the NO moiety from NOS2/iNOS to GAPDH via its own S-nitrosylated Cys-3. The iNOS-S100A8/A9 transnitrosylase complex is proposed to also direct selective inflammatory stimulus-dependent S-nitrosylation of multiple targets such as ANXA5, EZR, MSN and VIM by recognizing a [IL]-x-C-x-x-[DE] motif. The polypeptide is Protein S100-A9 (Homo sapiens (Human)).